A 389-amino-acid polypeptide reads, in one-letter code: Zinc finger C2HC domain-containing protein 1C homolog (389 aa).

2 disordered regions span residues 16-44 (MLPH…SQQS) and 84-115 (SYPH…GPQS). 2 stretches are compositionally biased toward polar residues: residues 35–44 (YEQGDSSQQS) and 90–102 (GISQ…DSQG). Residues 211-266 (VQIRRLEAAGESLEEEIRRKQILLRGKLKKTEEELRRIQMQKEQAKENENRELQKI) adopt a coiled-coil conformation. Disordered stretches follow at residues 301–320 (REDE…QLSD) and 343–389 (SELS…PQLG). A compositionally biased stretch (polar residues) spans 307–317 (GRSQQNSSPFQ). Residues 368–382 (SSLSMAPDSSGSSGS) show a composition bias toward low complexity.

This sequence belongs to the ZC2HC1 family.

This is Zinc finger C2HC domain-containing protein 1C homolog (ZC2HC1C) from Pongo abelii (Sumatran orangutan).